A 621-amino-acid chain; its full sequence is Probable bifunctional dTTP/UTP pyrophosphatase/methyltransferase protein (621 aa).

The interval 11 to 223 is MAF-like; that stretch reads LHKRVVLASA…PPRPEDLRRS (213 aa). Ser21 bears the Phosphoserine mark. Asp88 (proton acceptor; for pyrophosphatase activity) is an active-site residue. Ser228 carries the phosphoserine modification. Position 234 is a phosphothreonine (Thr234). The disordered stretch occupies residues 235 to 279; it reads FEDLSDVEGGGSEPTQRDAGSRDEKAEAGEAGQATAEAECHRTRE. Ser239 carries the phosphoserine modification. Positions 249–262 are enriched in basic and acidic residues; it reads TQRDAGSRDEKAEA. Residues 277–621 are ASMT-like; the sequence is TRETLPPFPT…DAILATKVAP (345 aa). At Ser421 the chain carries Phosphoserine. S-adenosyl-L-methionine contacts are provided by residues Asp482, 508 to 510, and Arg525; that span reads GDF.

This sequence in the N-terminal section; belongs to the Maf family. YhdE subfamily. It in the C-terminal section; belongs to the class I-like SAM-binding methyltransferase superfamily. Cation-independent O-methyltransferase family. As to quaternary structure, homodimer. The cofactor is a divalent metal cation. As to expression, widely expressed. In adult, highly expressed in pancreas, placenta, fibroblast, thymus, prostate, testis, ovary and colon. Expressed at lower levels in spleen, small intestine and leukocytes. In fetus, expressed at high levels in the lung and kidney and at lower level in brain and liver.

It catalyses the reaction dTTP + H2O = dTMP + diphosphate + H(+). The catalysed reaction is UTP + H2O = UMP + diphosphate + H(+). The enzyme catalyses CTP + H2O = CMP + diphosphate + H(+). It carries out the reaction psi-UTP + H2O = psi-UMP + diphosphate + H(+). It catalyses the reaction 5-methyl-UTP + H2O = 5-methyl-UMP + diphosphate + H(+). The catalysed reaction is 5-methyl-CTP + H2O = 5-methyl-CMP + diphosphate + H(+). Functionally, nucleoside triphosphate pyrophosphatase that hydrolyzes dTTP and UTP. Can also hydrolyze CTP and the modified nucleotides pseudo-UTP, 5-methyl-UTP (m(5)UTP) and 5-methyl-CTP (m(5)CTP). Has weak activity with dCTP, 8-oxo-GTP and N(4)-methyl-dCTP. May have a dual role in cell division arrest and in preventing the incorporation of modified nucleotides into cellular nucleic acids. In addition, the presence of the putative catalytic domain of S-adenosyl-L-methionine binding in the C-terminal region argues for a methyltransferase activity. This Homo sapiens (Human) protein is Probable bifunctional dTTP/UTP pyrophosphatase/methyltransferase protein (ASMTL).